Reading from the N-terminus, the 580-residue chain is Long-chain-fatty-acid--AMP ligase FadD28 (580 aa).

The interval 421-440 is disordered; that stretch reads SERTFGGKIVTPSPGTPEGP.

The protein belongs to the ATP-dependent AMP-binding enzyme family.

It carries out the reaction holo-[mycocerosate synthase] + a long-chain fatty acid + ATP = a long-chain fatty acyl-[mycocerosate synthase] + AMP + diphosphate. The catalysed reaction is a long-chain fatty acid + ATP + H(+) = a long-chain fatty acyl-AMP + diphosphate. It catalyses the reaction holo-[mycocerosate synthase] + a long-chain fatty acyl-AMP = a long-chain fatty acyl-[mycocerosate synthase] + AMP + H(+). It participates in lipid metabolism; fatty acid biosynthesis. In terms of biological role, involved in the biosynthesis of phthiocerol dimycocerosate (PDIM), a cell wall-associated lipid found only in pathogenic mycobacteria. Catalyzes the activation of long-chain fatty acids as acyl-adenylates (acyl-AMP), which are then transferred to the multifunctional polyketide synthase Mas for further chain extension. This chain is Long-chain-fatty-acid--AMP ligase FadD28 (fadD28), found in Mycobacterium bovis (strain ATCC BAA-935 / AF2122/97).